The sequence spans 443 residues: ATP-dependent protease ATPase subunit HslU (443 aa).

Residues Ile-18 and 60 to 65 (GVGKTE) each bind ATP. The interval 139–161 (ARDSGFDANPSEENNATRQKFRK) is disordered. ATP contacts are provided by Asp-256, Glu-321, and Arg-393.

This sequence belongs to the ClpX chaperone family. HslU subfamily. As to quaternary structure, a double ring-shaped homohexamer of HslV is capped on each side by a ring-shaped HslU homohexamer. The assembly of the HslU/HslV complex is dependent on binding of ATP.

It localises to the cytoplasm. Its function is as follows. ATPase subunit of a proteasome-like degradation complex; this subunit has chaperone activity. The binding of ATP and its subsequent hydrolysis by HslU are essential for unfolding of protein substrates subsequently hydrolyzed by HslV. HslU recognizes the N-terminal part of its protein substrates and unfolds these before they are guided to HslV for hydrolysis. The protein is ATP-dependent protease ATPase subunit HslU of Nitrosomonas eutropha (strain DSM 101675 / C91 / Nm57).